The chain runs to 440 residues: GTPase Der (440 aa).

EngA-type G domains follow at residues 3–167 (PIIA…PYDR) and 176–351 (TRIA…EQYC). GTP-binding positions include 9 to 16 (GRPNVGKS), 56 to 60 (DTGGF), 119 to 122 (NKVD), 182 to 189 (GRPNVGKS), 229 to 233 (DTAGI), and 294 to 297 (NKWD). Residues 352–436 (KRVTTGELNR…PLKLIFRGRD (85 aa)) enclose the KH-like domain.

Belongs to the TRAFAC class TrmE-Era-EngA-EngB-Septin-like GTPase superfamily. EngA (Der) GTPase family. In terms of assembly, associates with the 50S ribosomal subunit.

Its function is as follows. GTPase that plays an essential role in the late steps of ribosome biogenesis. This is GTPase Der from Geobacter sp. (strain M21).